A 131-amino-acid chain; its full sequence is Small ribosomal subunit protein uS8 (131 aa).

This sequence belongs to the universal ribosomal protein uS8 family. In terms of assembly, part of the 30S ribosomal subunit. Contacts proteins S5 and S12.

Its function is as follows. One of the primary rRNA binding proteins, it binds directly to 16S rRNA central domain where it helps coordinate assembly of the platform of the 30S subunit. The chain is Small ribosomal subunit protein uS8 from Polaromonas naphthalenivorans (strain CJ2).